The primary structure comprises 77 residues: Delta/omega-plectoxin-Pt1a (77 aa).

The N-terminal stretch at 1-20 (MKHLIVAVVLLSALAICTSA) is a signal peptide. Residues 21–34 (EEEQVNVPFRPEER) constitute a propeptide that is removed on maturation. Disulfide bonds link cysteine 38/cysteine 51, cysteine 45/cysteine 57, cysteine 50/cysteine 67, cysteine 54/cysteine 74, and cysteine 59/cysteine 65. Residue serine 73 is the site of O-palmitoyl serine attachment. Cysteine 74 carries the post-translational modification Cysteine amide.

Belongs to the neurotoxin 02 (plectoxin) family. 01 (Tx3) subfamily. Expressed by the venom gland.

The protein localises to the secreted. Functionally, excitatory toxin that acts on both calcium and sodium (Nav) channels. It preferentially blocks a subset of calcium channels that is apparently not required for neurotransmitter release, it decreases threshold for sodium channel activation and it slows sodium channel inactivation. As it enhances synaptic transmission by prolonging presynaptic release of neurotransmitter, its effects on sodium and calcium channels may act synergistically to sustain the terminal excitability. The chain is Delta/omega-plectoxin-Pt1a from Plectreurys tristis (Spider).